The primary structure comprises 238 residues: Ribonuclease PH (238 aa).

Phosphate-binding positions include arginine 86 and 124–126; that span reads GTR.

Belongs to the RNase PH family. As to quaternary structure, homohexameric ring arranged as a trimer of dimers.

It catalyses the reaction tRNA(n+1) + phosphate = tRNA(n) + a ribonucleoside 5'-diphosphate. Functionally, phosphorolytic 3'-5' exoribonuclease that plays an important role in tRNA 3'-end maturation. Removes nucleotide residues following the 3'-CCA terminus of tRNAs; can also add nucleotides to the ends of RNA molecules by using nucleoside diphosphates as substrates, but this may not be physiologically important. Probably plays a role in initiation of 16S rRNA degradation (leading to ribosome degradation) during starvation. The chain is Ribonuclease PH from Proteus mirabilis (strain HI4320).